Reading from the N-terminus, the 157-residue chain is Endosomal/vacuolar adapter protein YPT35 (157 aa).

Residues 43–157 (ITDVLVGDYH…SPVITHFILN (115 aa)) form the PX domain.

It belongs to the YPT35 family.

The protein localises to the endosome membrane. The protein resides in the vacuole membrane. Recruits the lipid transfer protein VPS13 to endosomal and vacuolar membranes. This chain is Endosomal/vacuolar adapter protein YPT35 (YPT35), found in Debaryomyces hansenii (strain ATCC 36239 / CBS 767 / BCRC 21394 / JCM 1990 / NBRC 0083 / IGC 2968) (Yeast).